Consider the following 385-residue polypeptide: Putative UDP-N-acetylglucosamine 2-epimerase (385 aa).

It belongs to the UDP-N-acetylglucosamine 2-epimerase family.

It localises to the cytoplasm. It carries out the reaction UDP-N-acetyl-alpha-D-glucosamine = UDP-N-acetyl-alpha-D-mannosamine. In Clostridium acetobutylicum (strain ATCC 824 / DSM 792 / JCM 1419 / IAM 19013 / LMG 5710 / NBRC 13948 / NRRL B-527 / VKM B-1787 / 2291 / W), this protein is Putative UDP-N-acetylglucosamine 2-epimerase.